The sequence spans 364 residues: Lysophosphatidic acid receptor 1 (364 aa).

Residues 1-50 lie on the Extracellular side of the membrane; it reads MAAASTSSPVISQPQFTAMNEQQCFYNESIAFFYNRSGKYLATEWNTVSK. Cystine bridges form between C24-C190 and C188-C195. 2 N-linked (GlcNAc...) asparagine glycosylation sites follow: N27 and N35. K39 contacts a 1-acyl-sn-glycero-3-phosphate. The chain crosses the membrane as a helical span at residues 51–75; it reads LVMGLGITVCVFIMLANLLVMVAIY. Residues 76-83 are Cytoplasmic-facing; it reads VNRRFHFP. A helical transmembrane segment spans residues 84 to 107; it reads IYYLMANLAAADFFAGLAYFYLMF. Topologically, residues 108–121 are extracellular; the sequence is NTGPNTRRLTVSTW. The chain crosses the membrane as a helical span at residues 122-144; that stretch reads LLRQGLIDTSLTASVANLLAIAI. 124 to 129 contacts a 1-acyl-sn-glycero-3-phosphate; it reads RQGLID. Residues 145–163 are Cytoplasmic-facing; sequence ERHITVFRMQLHTRMSNRR. A helical transmembrane segment spans residues 164–184; the sequence is VVVVIVVIWTMAIVMGAIPSV. Topologically, residues 185–204 are extracellular; that stretch reads GWNCICDIDHCSNMAPLYSD. Residues 205–225 traverse the membrane as a helical segment; it reads SYLVFWAIFNLVTFVVMVVLY. W210 lines the a 1-acyl-sn-glycero-3-phosphate pocket. Over 226-255 the chain is Cytoplasmic; it reads AHIFGYVRQRTMRMSRHSSGPRRNRDTMMS. A helical membrane pass occupies residues 256–280; it reads LLKTVVIVLGAFIVCWTPGLVLLLL. Residues 281–294 are Extracellular-facing; the sequence is DVCCPQCDVLAYEK. A disulfide bridge links C284 with C287. Residues 295-315 form a helical membrane-spanning segment; that stretch reads FFLLLAEFNSAMNPIIYSYRD. At 316 to 364 the chain is on the cytoplasmic side; the sequence is KEMSATFRQILCCQRNENPNGPTEGSDRSASSLNHTILAGVHSNDHSVV. Position 341 is a phosphoserine (S341). Residue T351 is modified to Phosphothreonine.

Belongs to the G-protein coupled receptor 1 family. Interacts with RALA and GRK2. Interacts with GNAQ and GNA13. Interacts with CD14; the interaction is enhanced by exposure to bacterial lipopolysaccharide (LPS). N-glycosylated. Detected in lung. Detected in oligodendrocytes in corpus callosum in brain cortex (at protein level). Expressed within the embryonic cerebral cortex, where it is enriched in the ventricular zone. In the adult brain, also expressed in oligodendrocytes, as well as Schwann cells of the peripheral nervous system. Expressed in many other tissues, including lung, heart, intestine, spleen, thymus, and stomach. No expression in liver. Detected in kidney and testis. Detected in embryonic fibroblasts. Detected in adult lung fibroblasts and lung endothelial cells. Detected in dorsal root ganglion and dorsal root. Detected in astrocytes. Detected in bone.

Its subcellular location is the cell surface. The protein localises to the cell membrane. It is found in the endosome. Functionally, receptor for lysophosphatidic acid (LPA). Plays a role in the reorganization of the actin cytoskeleton, cell migration, differentiation and proliferation, and thereby contributes to the responses to tissue damage and infectious agents. Activates downstream signaling cascades via the G(i)/G(o), G(12)/G(13), and G(q) families of heteromeric G proteins. Signaling inhibits adenylyl cyclase activity and decreases cellular cAMP levels. Signaling triggers an increase of cytoplasmic Ca(2+) levels. Activates RALA; this leads to the activation of phospholipase C (PLC) and the formation of inositol 1,4,5-trisphosphate. Signaling mediates activation of down-stream MAP kinases. Contributes to the regulation of cell shape. Promotes Rho-dependent reorganization of the actin cytoskeleton in neuronal cells and neurite retraction. Promotes the activation of Rho and the formation of actin stress fibers. Promotes formation of lamellipodia at the leading edge of migrating cells via activation of RAC1. Through its function as LPA receptor, plays a role in chemotaxis and cell migration, including responses to injury and wounding. Plays a role in triggering inflammation in response to bacterial lipopolysaccharide (LPS) via its interaction with CD14. Promotes cell proliferation in response to LPA. Inhibits the intracellular ciliogenesis pathway in response to LPA and through AKT1 activation. Required for normal skeleton development. May play a role in osteoblast differentiation. Required for normal brain development. Required for normal proliferation, survival and maturation of newly formed neurons in the adult dentate gyrus. Plays a role in pain perception and in the initiation of neuropathic pain. This is Lysophosphatidic acid receptor 1 (Lpar1) from Mus musculus (Mouse).